Reading from the N-terminus, the 431-residue chain is Adenylosuccinate synthetase (431 aa).

Residues 12-18 (GDEGKGK) and 40-42 (GHT) each bind GTP. The Proton acceptor role is filled by Asp13. Mg(2+) contacts are provided by Asp13 and Gly40. IMP contacts are provided by residues 13 to 16 (DEGK), 38 to 41 (NAGH), Thr129, Arg143, Gln224, Thr239, and Arg303. Residue His41 is the Proton donor of the active site. Position 299-305 (299-305 (VTTGRAR)) interacts with substrate. GTP-binding positions include Arg305, 331–333 (KLD), and 413–415 (GVG).

This sequence belongs to the adenylosuccinate synthetase family. As to quaternary structure, homodimer. The cofactor is Mg(2+).

It localises to the cytoplasm. The enzyme catalyses IMP + L-aspartate + GTP = N(6)-(1,2-dicarboxyethyl)-AMP + GDP + phosphate + 2 H(+). It functions in the pathway purine metabolism; AMP biosynthesis via de novo pathway; AMP from IMP: step 1/2. Its function is as follows. Plays an important role in the de novo pathway of purine nucleotide biosynthesis. Catalyzes the first committed step in the biosynthesis of AMP from IMP. The chain is Adenylosuccinate synthetase from Mycobacterium sp. (strain KMS).